An 881-amino-acid chain; its full sequence is MPDHSLFRLRILPWCIALAMSGSYSSVWAEDDIQFDSRFLELKGDTKIDLKRFSSQGYVEPGKYNLQVQLNKQPLAEEYDIYWYAGEDDVSKSYACLTPELVAQFGLKEDVAKNLQWSHDGKCLKPGQLEGVEIKADLSQSALVISLPQAYLEYTWPDWDPPSRWDDGISGIIADYSITAQTRHEENGGDDSNEISGNGTVGVNLGPWRMRADWQTNYQHTRSNDDDDEFGGDDTQKKWEWSRYYAWRALPSLKAKLALGEDYLNSDIFDGFNYVGGSVSTDDQMLPPNLRGYAPDISGVAHTTAKVTVSQMGRVIYETQVPAGPFRIQDLGDSVSGTLHIRIEEQNGQVQEYDISTASMPYLTRPGQVRYKIMMGRPQEWGHHVEGGFFSGAEASWGIANGWSLYGGALGDENYQSAALGVGRDLSTFGAVAFDVTHSHTKLDKDTAYGKGSLDGNSFRVSYSKDFDQLNSRVTFAGYRFSEENFMTMSEYLDASDSEMVRTGNDKEMYTATYNQNFRDAGVSVYLNYTRHTYWDREEQTNYNIMLSHYFNMGSIRNMSVSLTGYRYEYDNRADKGMYISLSMPWGDNSTVSYNGNYGSGTDSSQVGYFSRVDDATHYQLNIGTSDKHTSVDGYYSHDGSLAQVDLSANYHEGQYTSAGLSLQGGATLTTHGGALHRTQNMGGTRLLIDADGVADVPVEGNGAAVYTNMFGKAVVSDVNNYYRNQAYIDLNKLPENAEATQSVVQATLTEGAIGYRKFAVISGQKAMAVLRLQDGSHPPFGAEVKNDNEQTVGLVDDDGSVYLAGVKPGEHMSVFWSGVAHCDINLPDPLPADLFNGLLLPCQHKGNVAPVVPDDIKPVIQEQTQQVTPTDPPVSVSANQ.

The first 29 residues, 1–29 (MPDHSLFRLRILPWCIALAMSGSYSSVWA), serve as a signal peptide directing secretion.

Belongs to the fimbrial export usher family.

The protein localises to the cell outer membrane. In terms of biological role, part of the yfcOPQRSUV fimbrial operon. Could contribute to adhesion to various surfaces in specific environmental niches. Increases adhesion to eukaryotic T24 bladder epithelial cells in the absence of fim genes. Probably involved in the export and assembly of fimbrial subunits across the outer membrane. This Escherichia coli (strain K12) protein is Putative outer membrane usher protein YfcU (yfcU).